Here is a 203-residue protein sequence, read N- to C-terminus: Imidazole glycerol phosphate synthase subunit HisH 1 (203 aa).

In terms of domain architecture, Glutamine amidotransferase type-1 spans 1-203 (MIAIIDYNAG…KMIENFVELI (203 aa)). Catalysis depends on Cys-82, which acts as the Nucleophile. Residues His-184 and Glu-186 contribute to the active site.

In terms of assembly, heterodimer of HisH and HisF.

The protein resides in the cytoplasm. It carries out the reaction 5-[(5-phospho-1-deoxy-D-ribulos-1-ylimino)methylamino]-1-(5-phospho-beta-D-ribosyl)imidazole-4-carboxamide + L-glutamine = D-erythro-1-(imidazol-4-yl)glycerol 3-phosphate + 5-amino-1-(5-phospho-beta-D-ribosyl)imidazole-4-carboxamide + L-glutamate + H(+). The enzyme catalyses L-glutamine + H2O = L-glutamate + NH4(+). It participates in amino-acid biosynthesis; L-histidine biosynthesis; L-histidine from 5-phospho-alpha-D-ribose 1-diphosphate: step 5/9. Its function is as follows. IGPS catalyzes the conversion of PRFAR and glutamine to IGP, AICAR and glutamate. The HisH subunit provides the glutamine amidotransferase activity that produces the ammonia necessary to HisF for the synthesis of IGP and AICAR. In Methanococcus maripaludis (strain DSM 14266 / JCM 13030 / NBRC 101832 / S2 / LL), this protein is Imidazole glycerol phosphate synthase subunit HisH 1 (hisH1).